Consider the following 200-residue polypeptide: ATP synthase subunit s, mitochondrial (200 aa).

The transit peptide at 1–25 (MMLFGKISQQLCGLKKLPWSRDSRY) directs the protein to the mitochondrion. The tract at residues 1–61 (MMLFGKISQQ…SEWLLRCGAM (61 aa)) is N-terminal domain. A Mg(2+)-binding site is contributed by G59. LRR repeat units follow at residues 62–87 (VRYH…KYKI), 88–116 (QAID…KIRL), 117–141 (CKCH…KSML), and 142–173 (EMEI…LSDL). A Mg(2+)-binding site is contributed by T93.

Belongs to the ATP synthase subunit s family. In terms of assembly, homotetramer. Associates with ATP synthase.

It localises to the mitochondrion. Its subcellular location is the mitochondrion inner membrane. Functionally, involved in regulation of mitochondrial membrane ATP synthase. Necessary for H(+) conduction of ATP synthase. Facilitates energy-driven catalysis of ATP synthesis by blocking a proton leak through an alternative proton exit pathway. The protein is ATP synthase subunit s, mitochondrial (DMAC2L) of Bos taurus (Bovine).